A 126-amino-acid chain; its full sequence is Aspartate 1-decarboxylase (126 aa).

The active-site Schiff-base intermediate with substrate; via pyruvic acid is the Ser25. Ser25 is subject to Pyruvic acid (Ser). Thr57 lines the substrate pocket. The active-site Proton donor is Tyr58. Position 73 to 75 (Gly73 to Ala75) interacts with substrate.

The protein belongs to the PanD family. In terms of assembly, heterooctamer of four alpha and four beta subunits. Pyruvate serves as cofactor. Post-translationally, is synthesized initially as an inactive proenzyme, which is activated by self-cleavage at a specific serine bond to produce a beta-subunit with a hydroxyl group at its C-terminus and an alpha-subunit with a pyruvoyl group at its N-terminus.

It localises to the cytoplasm. It catalyses the reaction L-aspartate + H(+) = beta-alanine + CO2. Its pathway is cofactor biosynthesis; (R)-pantothenate biosynthesis; beta-alanine from L-aspartate: step 1/1. Its function is as follows. Catalyzes the pyruvoyl-dependent decarboxylation of aspartate to produce beta-alanine. This Psychromonas ingrahamii (strain DSM 17664 / CCUG 51855 / 37) protein is Aspartate 1-decarboxylase.